Reading from the N-terminus, the 259-residue chain is Phosphate import ATP-binding protein PstB (259 aa).

Positions 6-254 (SKNESVVFDV…PKDKRTEDYI (249 aa)) constitute an ABC transporter domain. Residue 45–52 (GPSGCGKS) participates in ATP binding.

The protein belongs to the ABC transporter superfamily. Phosphate importer (TC 3.A.1.7) family. In terms of assembly, the complex is composed of two ATP-binding proteins (PstB), two transmembrane proteins (PstC and PstA) and a solute-binding protein (PstS).

Its subcellular location is the cell membrane. The catalysed reaction is phosphate(out) + ATP + H2O = ADP + 2 phosphate(in) + H(+). In terms of biological role, part of the ABC transporter complex PstSACB involved in phosphate import. Responsible for energy coupling to the transport system. The sequence is that of Phosphate import ATP-binding protein PstB from Desulfitobacterium hafniense (strain Y51).